Reading from the N-terminus, the 211-residue chain is Dual specificity protein phosphatase 26 (211 aa).

Positions 60–207 (NHADEVWPGL…LLALDRRLRQ (148 aa)) constitute a Tyrosine-protein phosphatase domain. The Phosphocysteine intermediate role is filled by Cys152.

The protein belongs to the protein-tyrosine phosphatase family. Non-receptor class dual specificity subfamily. Interacts with HSF4.

Its subcellular location is the cytoplasm. The protein resides in the nucleus. It localises to the golgi apparatus. The catalysed reaction is O-phospho-L-tyrosyl-[protein] + H2O = L-tyrosyl-[protein] + phosphate. It carries out the reaction O-phospho-L-seryl-[protein] + H2O = L-seryl-[protein] + phosphate. The enzyme catalyses O-phospho-L-threonyl-[protein] + H2O = L-threonyl-[protein] + phosphate. In terms of biological role, inactivates MAPK1 and MAPK3 which leads to dephosphorylation of heat shock factor protein 4 and a reduction in its DNA-binding activity. The chain is Dual specificity protein phosphatase 26 (DUSP26) from Bos taurus (Bovine).